The following is a 60-amino-acid chain: Large ribosomal subunit protein bL32 (60 aa).

Over residues 1-19 the composition is skewed to basic residues; it reads MAVPKRRTSKRRKRARNTH. A disordered region spans residues 1 to 20; the sequence is MAVPKRRTSKRRKRARNTHK.

Belongs to the bacterial ribosomal protein bL32 family.

The polypeptide is Large ribosomal subunit protein bL32 (Gemmatimonas aurantiaca (strain DSM 14586 / JCM 11422 / NBRC 100505 / T-27)).